The primary structure comprises 474 residues: 2-succinylbenzoate--CoA ligase (474 aa).

This sequence belongs to the ATP-dependent AMP-binding enzyme family. MenE subfamily.

It carries out the reaction 2-succinylbenzoate + ATP + CoA = 2-succinylbenzoyl-CoA + AMP + diphosphate. The protein operates within quinol/quinone metabolism; 1,4-dihydroxy-2-naphthoate biosynthesis; 1,4-dihydroxy-2-naphthoate from chorismate: step 5/7. Its pathway is quinol/quinone metabolism; menaquinone biosynthesis. Functionally, converts 2-succinylbenzoate (OSB) to 2-succinylbenzoyl-CoA (OSB-CoA). In Staphylococcus epidermidis (strain ATCC 35984 / DSM 28319 / BCRC 17069 / CCUG 31568 / BM 3577 / RP62A), this protein is 2-succinylbenzoate--CoA ligase.